The sequence spans 719 residues: 1,4-alpha-glucan branching enzyme GlgB (719 aa).

The Nucleophile role is filled by Asp400. Glu453 functions as the Proton donor in the catalytic mechanism.

Belongs to the glycosyl hydrolase 13 family. GlgB subfamily. As to quaternary structure, monomer.

It catalyses the reaction Transfers a segment of a (1-&gt;4)-alpha-D-glucan chain to a primary hydroxy group in a similar glucan chain.. The protein operates within glycan biosynthesis; glycogen biosynthesis. Functionally, catalyzes the formation of the alpha-1,6-glucosidic linkages in glycogen by scission of a 1,4-alpha-linked oligosaccharide from growing alpha-1,4-glucan chains and the subsequent attachment of the oligosaccharide to the alpha-1,6 position. The chain is 1,4-alpha-glucan branching enzyme GlgB from Chlamydia caviae (strain ATCC VR-813 / DSM 19441 / 03DC25 / GPIC) (Chlamydophila caviae).